The sequence spans 703 residues: Cycloartenol synthase (703 aa).

PFTB repeat units lie at residues 59–103 and 106–148; these read IKKA…QLPE and QREI…RLLG. Asp-435 serves as the catalytic Proton donor. PFTB repeat units lie at residues 461 to 503, 539 to 579, 587 to 628, and 645 to 686; these read IADG…QNIM, IARG…VASG, IVKA…VNTG, and IERG…KNIF.

Belongs to the terpene cyclase/mutase family.

The enzyme catalyses (S)-2,3-epoxysqualene = cycloartenol. Its function is as follows. Converts oxidosqualene to cycloartenol (in vitro). The chain is Cycloartenol synthase (cas1) from Dictyostelium discoideum (Social amoeba).